The primary structure comprises 992 residues: Ribosome quality control complex subunit NEMF homolog (992 aa).

A compositionally biased stretch (basic and acidic residues) spans 214-231; it reads KETTEETPEAEDKPEKGG. The interval 214–245 is disordered; sequence KETTEETPEAEDKPEKGGKKQRKKQQNTKLEQ. 2 coiled-coil regions span residues 331 to 370 and 481 to 514; these read STQE…LTKV and SAAQ…VRTI. Disordered stretches follow at residues 688-715 and 771-895; these read EVEH…NTEI and GPSR…GDVD. Residues 702–715 are compositionally biased toward polar residues; sequence SNINLSEPSSNTEI. The stretch at 774 to 839 forms a coiled coil; that stretch reads RKKQVSAKKT…QDDEEREIRM (66 aa). The span at 782-796 shows a compositional bias: basic and acidic residues; that stretch reads KTKEDKARAKQEAAK. Basic residues predominate over residues 814–825; that stretch reads RGQKGKLKKMKQ. Basic and acidic residues predominate over residues 845 to 874; that stretch reads SGKEKPQASADKVVEKSESTKEYVKPEKSA.

The protein belongs to the NEMF family. In terms of assembly, component of the ribosome quality control complex (RQC), composed of at least the E3 ubiquitin ligase l(3)76BDr/LTN1 and Clbn/NEMF associated with the 60S ribosomal subunit. The complex probably also contains TCF25 as well as TER94/VCP and its ubiquitin-binding cofactors. Interacts (via its C-terminus) with pros (via its homeobox). Interacts (via its N-terminus) with emb. In terms of tissue distribution, expressed in enterocytes (at protein level).

The protein localises to the nucleus. It is found in the cytoplasm. Its subcellular location is the mitochondrion outer membrane. In terms of biological role, key component of the ribosome quality control complex (RQC), a ribosome-associated complex that mediates the extraction of incompletely synthesized nascent chains from stalled ribosomes as well as their ubiquitin-mediated proteasomal degradation. Thereby, frees 60S subunit ribosomes from the stalled translation complex and prevents the accumulation of nascent polypeptide chains that are potentially toxic for the cell. Within the RQC complex, Clbn/NEMF specifically binds stalled 60S ribosomal subunits by recognizing an exposed, nascent chain-conjugated tRNA moiety. Following binding to stalled 60S ribosomal subunits, Clbn/NEMF mediates CAT tailing by recruiting alanine-charged tRNA to the A-site and directing the elongation of stalled nascent chains independently of mRNA or 40S subunits, leading to non-templated C-terminal alanine extensions (CAT tails). On mitochondrial surface, plays a role in mitochondrial-stress induced translational termination impairment and protein carboxyl terminal extension (MISTERMINATE). Plays a role in regulating nuclear transport possibly through directly binding to both emb and cargo proteins. Plays a role in the regulation of G1-to-S cell cycle transition. Regulates S phase checkpoint by antagonizing E2F1 activity. Together with hid and tefu/ATM, plays a role in DNA damage-induced apoptosis through both p53-dependent and -independent activity. Plays an essential role in the regulation of mitochondrial structure and redox state in enterocytes which is essential for the control of intestinal stem cells proliferation and intestinal homeostasis. This chain is Ribosome quality control complex subunit NEMF homolog, found in Drosophila melanogaster (Fruit fly).